A 512-amino-acid polypeptide reads, in one-letter code: Glucagon-like peptide 2 receptor (512 aa).

At 1-135 (MRRLWGPGTP…KQNVDHYHHT (135 aa)) the chain is on the extracellular side. Intrachain disulfides connect Cys-43-Cys-65, Cys-56-Cys-97, and Cys-78-Cys-119. A glycan (N-linked (GlcNAc...) asparagine) is linked at Asn-73. A helical membrane pass occupies residues 136–160 (LLSTLQLMYTVGYSLSLISLFLALT). The Cytoplasmic segment spans residues 161-172 (LFLFLRKLHCTR). A helical transmembrane segment spans residues 173 to 197 (NYIHMNLFASFILRALVVLVKDMVF). Over 198–223 (YNSYSRRPDSESGWMSYLSEISASCR) the chain is Extracellular. A helical membrane pass occupies residues 224–247 (SVQVLLHYFVGTNHLWLLVEGLYL). Residues 248–261 (HALLEPTVLPERRL) lie on the Cytoplasmic side of the membrane. A helical membrane pass occupies residues 262–283 (WPKYLVVGWAFPMLFVIPWIFV). Residues 284–301 (RASLENTGCWAVNENKKI) lie on the Extracellular side of the membrane. Residues 302–324 (WWIIRGPILLCVTVNFFIFLKIL) form a helical membrane-spanning segment. Residues 325–348 (KLLISKFRAHQMCFRDYKYRLAKS) are Cytoplasmic-facing. A helical membrane pass occupies residues 349–367 (TLLLILLMGVHEFLFTFFT). Topologically, residues 368–379 (DDQVQGFSRLIR) are extracellular. The helical transmembrane segment at 380 to 400 (LFIQLTLSSFHGFLVALQYGF) threads the bilayer. At 401–512 (ASREVKAELR…MEEILEESEI (112 aa)) the chain is on the cytoplasmic side. A disordered region spans residues 458-494 (SGVSSHLTAGNLRDHGAQPHRGRGAWPRASSLSESSE).

The protein belongs to the G-protein coupled receptor 2 family.

It localises to the cell membrane. Functionally, this is a receptor for glucagon-like peptide 2. The activity of this receptor is mediated by G proteins which activate adenylyl cyclase. This Mus musculus (Mouse) protein is Glucagon-like peptide 2 receptor (Glp2r).